The following is a 261-amino-acid chain: Thioesterase AMT4 (261 aa).

It belongs to the AMT4 thioesterase family.

Its pathway is mycotoxin biosynthesis. Thioesterase; part of the gene clusters that mediate the biosynthesis of AM-toxins, host-selective toxins (HSTs) causing Alternaria blotch on apple, a worldwide distributed disease. AM-toxins are cyclic depsipeptides containing the 3 residues 2-hydroxy-isovaleric acid (2-HIV), dehydroalanine, L-alanine which are common for all 3 AM-toxins I to III. The fourth precursor is L-alpha-amino-methoxyphenyl-valeric acid (L-Amv) for AM-toxin I, L-alpha-amino-phenyl-valeric acid (L-Apv) for AM-toxin II, and L-alpha-amino-hydroxyphenyl-valeric acid (L-Ahv) for AM-toxin III. AM-toxins have two target sites for affecting susceptible apple cells; they cause invagination of the plasma membrane and electrolyte loss and chloroplast disorganization. The non-ribosomal peptide synthetase AMT1 contains 4 catalytic modules and is responsible for activation of each residue in AM-toxin. The aldo-keto reductase AMT2 catalyzes the conversion of 2-keto-isovaleric acid (2-KIV) to 2-hydroxy-isovaleric acid (2-HIV), one of the precursor residues incorporated by AMT1 during AM-toxin biosynthesis, by reduction of its ketone to an alcohol. The cytochrome P450 monooxygenase AMT3 and the thioesterase AMT4 are also important for AM-toxin production, but their exact function within the AM-toxin biosynthesis are not known yet. Up to 21 proteins (including AMT1 to AMT4) are predicted to be involved in AM-toxin biosynthesis since their expression ishighly up-regulated in AM-toxin-producing cultures. This is Thioesterase AMT4 from Alternaria alternata (Alternaria rot fungus).